Here is a 121-residue protein sequence, read N- to C-terminus: Large ribosomal subunit protein bL12 (121 aa).

Belongs to the bacterial ribosomal protein bL12 family. As to quaternary structure, homodimer. Part of the ribosomal stalk of the 50S ribosomal subunit. Forms a multimeric L10(L12)X complex, where L10 forms an elongated spine to which 2 to 4 L12 dimers bind in a sequential fashion. Binds GTP-bound translation factors.

Functionally, forms part of the ribosomal stalk which helps the ribosome interact with GTP-bound translation factors. Is thus essential for accurate translation. The sequence is that of Large ribosomal subunit protein bL12 from Tremblaya princeps.